Here is a 362-residue protein sequence, read N- to C-terminus: Chorismate synthase (362 aa).

Arginine 47 provides a ligand contact to NADP(+). Residues 124-126, glycine 286, 301-305, and arginine 327 contribute to the FMN site; these read RSS and KPTAT.

Belongs to the chorismate synthase family. In terms of assembly, homotetramer. Requires FMNH2 as cofactor.

The catalysed reaction is 5-O-(1-carboxyvinyl)-3-phosphoshikimate = chorismate + phosphate. Its pathway is metabolic intermediate biosynthesis; chorismate biosynthesis; chorismate from D-erythrose 4-phosphate and phosphoenolpyruvate: step 7/7. Catalyzes the anti-1,4-elimination of the C-3 phosphate and the C-6 proR hydrogen from 5-enolpyruvylshikimate-3-phosphate (EPSP) to yield chorismate, which is the branch point compound that serves as the starting substrate for the three terminal pathways of aromatic amino acid biosynthesis. This reaction introduces a second double bond into the aromatic ring system. This chain is Chorismate synthase, found in Gloeothece citriformis (strain PCC 7424) (Cyanothece sp. (strain PCC 7424)).